The sequence spans 540 residues: Acrosin-binding protein (540 aa).

The N-terminal stretch at 1–24 (MKLAASFLLMLLEVLLLPETPLSA) is a signal peptide. The segment at 25 to 104 (EEALASTPGS…ASWFESFCQF (80 aa)) is pro-ACR binding. Positions 25-272 (EEALASTPGS…NPSFFTPRVR (248 aa)) are cleaved as a propeptide — removed in mature form. The disordered stretch occupies residues 181-266 (SLSLGGKEQQ…SKSLSSNPSF (86 aa)). The span at 195–213 (LGLEQQHKQEQIQEHKLEE) shows a compositional bias: basic and acidic residues. Residues 214–241 (AQEQEEQEEEEEEEEAKQEEGQGTEEGL) show a composition bias toward acidic residues. The span at 256-266 (QSKSLSSNPSF) shows a compositional bias: polar residues. Residues 316-424 (LPHTETLMVL…NQAKIPEKGR (109 aa)) form a pro-ACR binding region.

In terms of assembly, binds pro-ACR. Does not bind the mature form of ACR. Binds pro-ACR. Does not bind mature form of ACR. In terms of processing, the N-terminus is blocked. Phosphorylated on Tyr residues in capacitated sperm. Post-translationally, synthesized as a 60-kDa precursor, the 32-kDa mature form is post-translationally produced by the removal of the N-terminal half of the precursor during sperm maturation in the testis and/or epididymis.

The protein resides in the cytoplasmic vesicle. It localises to the secretory vesicle. It is found in the acrosome. In terms of biological role, acrosomal protein that maintains proacrosin (pro-ACR) as an enzymatically inactive zymogen in the acrosome. Involved also in the acrosome formation. Its function is as follows. Maintains pro-ACR as an enzymatically inactive zymogen in the acrosome until acrosomal exocytosis. Partially also contributes to the assembly of acrosomal proteins to form an acrosomal granule. Functionally, rodent specific isoform that participates in the formation of the acrosomal granule into the center of the acrosomal vesicle during early spermiogenesis. In the fertilization process promotes ACR release from the acrosome during acrosomal exocytosis. This Rattus norvegicus (Rat) protein is Acrosin-binding protein.